A 431-amino-acid chain; its full sequence is Serine hydroxymethyltransferase 2 (431 aa).

(6S)-5,6,7,8-tetrahydrofolate-binding positions include leucine 131 and 135 to 137 (GHL). The residue at position 240 (lysine 240) is an N6-(pyridoxal phosphate)lysine.

Belongs to the SHMT family. Homodimer. Pyridoxal 5'-phosphate is required as a cofactor.

Its subcellular location is the cytoplasm. The enzyme catalyses (6R)-5,10-methylene-5,6,7,8-tetrahydrofolate + glycine + H2O = (6S)-5,6,7,8-tetrahydrofolate + L-serine. The protein operates within one-carbon metabolism; tetrahydrofolate interconversion. Its pathway is amino-acid biosynthesis; glycine biosynthesis; glycine from L-serine: step 1/1. Its function is as follows. Catalyzes the reversible interconversion of serine and glycine with tetrahydrofolate (THF) serving as the one-carbon carrier. This reaction serves as the major source of one-carbon groups required for the biosynthesis of purines, thymidylate, methionine, and other important biomolecules. Also exhibits THF-independent aldolase activity toward beta-hydroxyamino acids, producing glycine and aldehydes, via a retro-aldol mechanism. This chain is Serine hydroxymethyltransferase 2, found in Photobacterium profundum (strain SS9).